A 611-amino-acid polypeptide reads, in one-letter code: Protein Spindly (611 aa).

Residues 1-288 adopt a coiled-coil conformation; that stretch reads MEESETVLKL…QFQSLQKQHA (288 aa). A compositionally biased stretch (basic and acidic residues) spans 499–511; sequence LKEDSSLSTKEQD. The segment at 499 to 611 is disordered; the sequence is LKEDSSLSTK…PAATTQCPQQ (113 aa). The segment covering 549 to 567 has biased composition (polar residues); sequence RNTNNCSVTSTSPRSASEE. The segment covering 570–583 has biased composition (basic and acidic residues); sequence SESKRFDEEQEKRK.

This sequence belongs to the Spindly family.

The protein localises to the chromosome. The protein resides in the centromere. Its subcellular location is the kinetochore. Its function is as follows. Required for the localization of dynein and dynactin to the mitotic kintochore. Dynein is believed to control the initial lateral interaction between the kinetochore and spindle microtubules and to facilitate the subsequent formation of end-on kinetochore-microtubule attachments mediated by the NDC80 complex. May act as an adapter protein linking the dynein motor complex to various cargos. The polypeptide is Protein Spindly (spdl1) (Xenopus tropicalis (Western clawed frog)).